Consider the following 442-residue polypeptide: 3-phosphoshikimate 1-carboxyvinyltransferase (442 aa).

Residues Lys25, Ser26, and Arg30 each coordinate 3-phosphoshikimate. Position 25 (Lys25) interacts with phosphoenolpyruvate. Phosphoenolpyruvate-binding residues include Gly97 and Arg125. Residues Ser170, Gln172, Asp323, and Lys350 each contribute to the 3-phosphoshikimate site. A phosphoenolpyruvate-binding site is contributed by Gln172. Asp323 (proton acceptor) is an active-site residue. The phosphoenolpyruvate site is built by Arg354 and Arg399.

This sequence belongs to the EPSP synthase family. As to quaternary structure, monomer.

The protein localises to the cytoplasm. It catalyses the reaction 3-phosphoshikimate + phosphoenolpyruvate = 5-O-(1-carboxyvinyl)-3-phosphoshikimate + phosphate. The protein operates within metabolic intermediate biosynthesis; chorismate biosynthesis; chorismate from D-erythrose 4-phosphate and phosphoenolpyruvate: step 6/7. In terms of biological role, catalyzes the transfer of the enolpyruvyl moiety of phosphoenolpyruvate (PEP) to the 5-hydroxyl of shikimate-3-phosphate (S3P) to produce enolpyruvyl shikimate-3-phosphate and inorganic phosphate. In Bartonella quintana (strain Toulouse) (Rochalimaea quintana), this protein is 3-phosphoshikimate 1-carboxyvinyltransferase.